We begin with the raw amino-acid sequence, 649 residues long: Protein translocase subunit SecA 2 (649 aa).

Residues Gln-105, 123–127 (GEGKT), and Asp-535 each bind ATP.

It belongs to the SecA family. In terms of assembly, monomer and homodimer. Part of the essential Sec protein translocation apparatus which comprises SecA, SecYEG and auxiliary proteins SecDF-YajC and YidC.

It is found in the cell inner membrane. Its subcellular location is the cytoplasm. The enzyme catalyses ATP + H2O + cellular proteinSide 1 = ADP + phosphate + cellular proteinSide 2.. In terms of biological role, part of the Sec protein translocase complex. Interacts with the SecYEG preprotein conducting channel. Has a central role in coupling the hydrolysis of ATP to the transfer of proteins into and across the cell membrane, serving both as a receptor for the preprotein-SecB complex and as an ATP-driven molecular motor driving the stepwise translocation of polypeptide chains across the membrane. The protein is Protein translocase subunit SecA 2 of Magnetococcus marinus (strain ATCC BAA-1437 / JCM 17883 / MC-1).